Reading from the N-terminus, the 814-residue chain is G-type lectin S-receptor-like serine/threonine-protein kinase At1g61400 (814 aa).

An N-terminal signal peptide occupies residues 1-34 (MDFLFLLLERKNKHMGKKRVVLLWLSIFISFSSA). A Bulb-type lectin domain is found at 35–154 (EITEESPLSI…VSGRTLWESF (120 aa)). Residues 35 to 436 (EITEESPLSI…ELDVNKRKKT (402 aa)) lie on the Extracellular side of the membrane. N-linked (GlcNAc...) asparagine glycosylation is found at Asn-63, Asn-104, Asn-127, and Asn-246. In terms of domain architecture, EGF-like; atypical spans 288 to 324 (PANSCDIYGVCGPFGFCVISVPPKCKCFKGFIPKSIE). 2 cysteine pairs are disulfide-bonded: Cys-292–Cys-304 and Cys-298–Cys-312. N-linked (GlcNAc...) asparagine glycosylation is found at Asn-330, Asn-346, and Asn-385. The PAN domain maps to 343 to 425 (CQGNSTGKDA…GELLSIRLAR (83 aa)). Cystine bridges form between Cys-378-Cys-399 and Cys-382-Cys-388. The helical transmembrane segment at 437–457 (IIAITVSLTLFVILGFTAFGF) threads the bilayer. The Cytoplasmic portion of the chain corresponds to 458–814 (WRRRVEQNAL…EMTESVIHGR (357 aa)). Residues 500-785 (FSLSNKLGHG…DLPLPKQPTF (286 aa)) enclose the Protein kinase domain. Residues 506–514 (LGHGGFGSV) and Lys-528 contribute to the ATP site. A phosphoserine mark is found at Ser-534 and Ser-549. The tract at residues 589 to 606 (KKRLEIDWPKRFDIIQGI) is caM-binding. Residue Asp-625 is the Proton acceptor of the active site. Phosphoserine is present on residues Ser-629 and Ser-642. Position 659 is a phosphothreonine (Thr-659). Phosphoserine occurs at positions 702 and 796.

It belongs to the protein kinase superfamily. Ser/Thr protein kinase family.

Its subcellular location is the cell membrane. It catalyses the reaction L-seryl-[protein] + ATP = O-phospho-L-seryl-[protein] + ADP + H(+). It carries out the reaction L-threonyl-[protein] + ATP = O-phospho-L-threonyl-[protein] + ADP + H(+). The protein is G-type lectin S-receptor-like serine/threonine-protein kinase At1g61400 of Arabidopsis thaliana (Mouse-ear cress).